We begin with the raw amino-acid sequence, 486 residues long: ATP synthase subunit beta (486 aa).

ATP is bound at residue 164 to 171 (GGAGVGKT).

The protein belongs to the ATPase alpha/beta chains family. As to quaternary structure, F-type ATPases have 2 components, CF(1) - the catalytic core - and CF(0) - the membrane proton channel. CF(1) has five subunits: alpha(3), beta(3), gamma(1), delta(1), epsilon(1). CF(0) has four main subunits: a(1), b(1), b'(1) and c(9-12).

It localises to the cellular thylakoid membrane. It carries out the reaction ATP + H2O + 4 H(+)(in) = ADP + phosphate + 5 H(+)(out). Produces ATP from ADP in the presence of a proton gradient across the membrane. The catalytic sites are hosted primarily by the beta subunits. The polypeptide is ATP synthase subunit beta (Prochlorococcus marinus (strain MIT 9515)).